The sequence spans 133 residues: Small ribosomal subunit protein bS6 (133 aa).

This sequence belongs to the bacterial ribosomal protein bS6 family.

Binds together with bS18 to 16S ribosomal RNA. The sequence is that of Small ribosomal subunit protein bS6 from Chlorobium luteolum (strain DSM 273 / BCRC 81028 / 2530) (Pelodictyon luteolum).